The chain runs to 484 residues: Phosphomevalonate kinase erg8 (484 aa).

The tract at residues 54–77 (REAASGSAHGRSDTPQAEGNVHGD) is disordered. Position 184-194 (184-194 (AHKTGLGSSAA)) interacts with ATP.

This sequence belongs to the GHMP kinase family. Mevalonate kinase subfamily.

The catalysed reaction is (R)-5-phosphomevalonate + ATP = (R)-5-diphosphomevalonate + ADP. The protein operates within isoprenoid biosynthesis; isopentenyl diphosphate biosynthesis via mevalonate pathway; isopentenyl diphosphate from (R)-mevalonate: step 2/3. Phosphomevalonate kinase; part of the second module of ergosterol biosynthesis pathway that includes the middle steps of the pathway. Erg8 converts 5-phosphomevalonate to 5-diphosphomevalonate. The second module is carried out in the vacuole and involves the formation of farnesyl diphosphate, which is also an important intermediate in the biosynthesis of ubiquinone, dolichol, heme and prenylated proteins. Activity by the mevalonate kinase erg12 (AFUA_4G07780) first converts mevalonate into 5-phosphomevalonate. 5-phosphomevalonate is then further converted to 5-diphosphomevalonate by the phosphomevalonate kinase erg8 (AFUA_5G10680). The diphosphomevalonate decarboxylase mvd1 (AFUA_4G07130) then produces isopentenyl diphosphate. The isopentenyl-diphosphate delta-isomerase idi1 (AFUA_6G11160) then catalyzes the 1,3-allylic rearrangement of the homoallylic substrate isopentenyl (IPP) to its highly electrophilic allylic isomer, dimethylallyl diphosphate (DMAPP). Finally the farnesyl diphosphate synthase erg20 (AFUA_5G02450) catalyzes the sequential condensation of isopentenyl pyrophosphate with dimethylallyl pyrophosphate, and then with the resultant geranylpyrophosphate to the ultimate product farnesyl pyrophosphate. In Aspergillus fumigatus (strain ATCC MYA-4609 / CBS 101355 / FGSC A1100 / Af293) (Neosartorya fumigata), this protein is Phosphomevalonate kinase erg8.